We begin with the raw amino-acid sequence, 69 residues long: Large ribosomal subunit protein uL29 (69 aa).

This sequence belongs to the universal ribosomal protein uL29 family.

This is Large ribosomal subunit protein uL29 from Rhodopseudomonas palustris (strain BisB5).